The following is a 215-amino-acid chain: Hibernation-associated plasma protein HP-25 (215 aa).

Positions 1-28 are cleaved as a signal peptide; sequence MPAQRGGALSMGAAGFWILVLSITSALA. The disordered stretch occupies residues 29–96; the sequence is DSNNQGNSEP…RPKSAFAVKL (68 aa). 2 stretches are compositionally biased toward pro residues: residues 39–51 and 60–77; these read CGPP…PGIP and LGPP…PQGP. In terms of domain architecture, Collagen-like spans 40–81; it reads GPPGPPGPPGIPGFPGAPGALGPPGPPGVPGIPGPQGPPGDV. Residues 85 to 215 enclose the C1q domain; the sequence is SSRPKSAFAV…VFFGYLLYGK (131 aa). A glycan (N-linked (GlcNAc...) asparagine) is linked at Asn-167.

Plasma; synthesized in the liver.

It localises to the secreted. Functionally, plasma proteins HP-20, HP-25, HP-27 and HP-55 form a 140 kDa complex via disulfide bonds in the plasma and are hibernation specific. The chain is Hibernation-associated plasma protein HP-25 from Tamias sibiricus (Siberian chipmunk).